The chain runs to 714 residues: Methylmalonyl-CoA mutase (714 aa).

In terms of domain architecture, B12-binding spans 584–714; sequence RPRILIAKMG…VLNLISQHHD (131 aa). Adenosylcob(III)alamin is bound at residue histidine 597.

This sequence belongs to the methylmalonyl-CoA mutase family. In terms of assembly, homodimer. Interacts with ArgK. It depends on adenosylcob(III)alamin as a cofactor.

The catalysed reaction is (R)-methylmalonyl-CoA = succinyl-CoA. Its function is as follows. Catalyzes the interconversion of succinyl-CoA and methylmalonyl-CoA. Could be part of a pathway that converts succinate to propionate. The polypeptide is Methylmalonyl-CoA mutase (scpA) (Escherichia coli (strain K12)).